Consider the following 400-residue polypeptide: Probable aspartate/prephenate aminotransferase (400 aa).

L-aspartate-binding residues include G39, W125, and N175. An N6-(pyridoxal phosphate)lysine modification is found at K239. L-aspartate is bound at residue R375.

The protein belongs to the class-I pyridoxal-phosphate-dependent aminotransferase family. Homodimer. Pyridoxal 5'-phosphate serves as cofactor.

Its subcellular location is the cytoplasm. It carries out the reaction L-aspartate + 2-oxoglutarate = oxaloacetate + L-glutamate. It catalyses the reaction L-arogenate + 2-oxoglutarate = prephenate + L-glutamate. Functionally, catalyzes the reversible conversion of aspartate and 2-oxoglutarate to glutamate and oxaloacetate. Can also transaminate prephenate in the presence of glutamate. This Rhizobium leguminosarum bv. phaseoli protein is Probable aspartate/prephenate aminotransferase (aspC).